Consider the following 414-residue polypeptide: Tryptophan synthase beta chain (414 aa).

Residues 1-26 form a disordered region; the sequence is MVSTFSRQDQNYKNDDLNQPSKEGRF. Basic and acidic residues predominate over residues 10-26; it reads QNYKNDDLNQPSKEGRF. Position 109 is an N6-(pyridoxal phosphate)lysine (Lys109).

This sequence belongs to the TrpB family. As to quaternary structure, tetramer of two alpha and two beta chains. It depends on pyridoxal 5'-phosphate as a cofactor.

It catalyses the reaction (1S,2R)-1-C-(indol-3-yl)glycerol 3-phosphate + L-serine = D-glyceraldehyde 3-phosphate + L-tryptophan + H2O. It functions in the pathway amino-acid biosynthesis; L-tryptophan biosynthesis; L-tryptophan from chorismate: step 5/5. Functionally, the beta subunit is responsible for the synthesis of L-tryptophan from indole and L-serine. The chain is Tryptophan synthase beta chain from Prochlorococcus marinus (strain MIT 9312).